Consider the following 288-residue polypeptide: Bifunctional protein FolD (288 aa).

Residues 168-170 (GRG), T195, and V236 contribute to the NADP(+) site.

It belongs to the tetrahydrofolate dehydrogenase/cyclohydrolase family. Homodimer.

The catalysed reaction is (6R)-5,10-methylene-5,6,7,8-tetrahydrofolate + NADP(+) = (6R)-5,10-methenyltetrahydrofolate + NADPH. It carries out the reaction (6R)-5,10-methenyltetrahydrofolate + H2O = (6R)-10-formyltetrahydrofolate + H(+). Its pathway is one-carbon metabolism; tetrahydrofolate interconversion. Functionally, catalyzes the oxidation of 5,10-methylenetetrahydrofolate to 5,10-methenyltetrahydrofolate and then the hydrolysis of 5,10-methenyltetrahydrofolate to 10-formyltetrahydrofolate. This chain is Bifunctional protein FolD, found in Mycobacterium sp. (strain JLS).